The sequence spans 898 residues: Alanine--tRNA ligase (898 aa).

Zn(2+) is bound by residues His-582, His-586, Cys-685, and His-689.

This sequence belongs to the class-II aminoacyl-tRNA synthetase family. Requires Zn(2+) as cofactor.

It is found in the cytoplasm. It catalyses the reaction tRNA(Ala) + L-alanine + ATP = L-alanyl-tRNA(Ala) + AMP + diphosphate. Functionally, catalyzes the attachment of alanine to tRNA(Ala) in a two-step reaction: alanine is first activated by ATP to form Ala-AMP and then transferred to the acceptor end of tRNA(Ala). Also edits incorrectly charged Ser-tRNA(Ala) and Gly-tRNA(Ala) via its editing domain. The chain is Alanine--tRNA ligase from Mycolicibacterium vanbaalenii (strain DSM 7251 / JCM 13017 / BCRC 16820 / KCTC 9966 / NRRL B-24157 / PYR-1) (Mycobacterium vanbaalenii).